The sequence spans 218 residues: Probable nicotinate-nucleotide adenylyltransferase (218 aa).

It belongs to the NadD family.

It catalyses the reaction nicotinate beta-D-ribonucleotide + ATP + H(+) = deamido-NAD(+) + diphosphate. Its pathway is cofactor biosynthesis; NAD(+) biosynthesis; deamido-NAD(+) from nicotinate D-ribonucleotide: step 1/1. In terms of biological role, catalyzes the reversible adenylation of nicotinate mononucleotide (NaMN) to nicotinic acid adenine dinucleotide (NaAD). The polypeptide is Probable nicotinate-nucleotide adenylyltransferase (Halorhodospira halophila (strain DSM 244 / SL1) (Ectothiorhodospira halophila (strain DSM 244 / SL1))).